Reading from the N-terminus, the 102-residue chain is NADH-quinone oxidoreductase subunit K (102 aa).

The next 3 membrane-spanning stretches (helical) occupy residues Leu5–Leu25, Ile31–Phe51, and Ile62–Leu82.

This sequence belongs to the complex I subunit 4L family. NDH-1 is composed of 14 different subunits. Subunits NuoA, H, J, K, L, M, N constitute the membrane sector of the complex.

It localises to the cell inner membrane. The enzyme catalyses a quinone + NADH + 5 H(+)(in) = a quinol + NAD(+) + 4 H(+)(out). Functionally, NDH-1 shuttles electrons from NADH, via FMN and iron-sulfur (Fe-S) centers, to quinones in the respiratory chain. The immediate electron acceptor for the enzyme in this species is believed to be ubiquinone. Couples the redox reaction to proton translocation (for every two electrons transferred, four hydrogen ions are translocated across the cytoplasmic membrane), and thus conserves the redox energy in a proton gradient. This chain is NADH-quinone oxidoreductase subunit K, found in Albidiferax ferrireducens (strain ATCC BAA-621 / DSM 15236 / T118) (Rhodoferax ferrireducens).